The following is a 467-amino-acid chain: Asparagine--tRNA ligase (467 aa).

It belongs to the class-II aminoacyl-tRNA synthetase family. As to quaternary structure, homodimer.

It localises to the cytoplasm. The enzyme catalyses tRNA(Asn) + L-asparagine + ATP = L-asparaginyl-tRNA(Asn) + AMP + diphosphate + H(+). This Actinobacillus pleuropneumoniae serotype 5b (strain L20) protein is Asparagine--tRNA ligase.